The chain runs to 776 residues: Isoamylase (776 aa).

The first 26 residues, 1–26 (MKCPKILAALLGCAVLAGVPAMPAHA), serve as a signal peptide directing secretion. 5 residues coordinate Ca(2+): D154, E255, T256, N258, and D285. D401 functions as the Nucleophile in the catalytic mechanism. The cysteines at positions 410 and 422 are disulfide-linked. The active-site Proton donor is E461. Cystine bridges form between C546–C616 and C738–C766.

Belongs to the glycosyl hydrolase 13 family. In terms of assembly, monomer. The cofactor is Ca(2+).

It catalyses the reaction Hydrolysis of (1-&gt;6)-alpha-D-glucosidic branch linkages in glycogen, amylopectin and their beta-limit dextrins.. This is Isoamylase (iam) from Pseudomonas sp. (strain SMP1).